The primary structure comprises 268 residues: GTP cyclohydrolase FolE2 (268 aa).

The protein belongs to the GTP cyclohydrolase IV family.

The catalysed reaction is GTP + H2O = 7,8-dihydroneopterin 3'-triphosphate + formate + H(+). It participates in cofactor biosynthesis; 7,8-dihydroneopterin triphosphate biosynthesis; 7,8-dihydroneopterin triphosphate from GTP: step 1/1. In terms of biological role, converts GTP to 7,8-dihydroneopterin triphosphate. The sequence is that of GTP cyclohydrolase FolE2 from Paraburkholderia xenovorans (strain LB400).